The following is a 202-amino-acid chain: Glycerol-3-phosphate acyltransferase (202 aa).

A run of 5 helical transmembrane segments spans residues 3 to 23 (NLIIYAFIYLLSSIPFGLILA), 87 to 107 (LLWSVAVLAILGHCFSIYLLF), 118 to 138 (GAMIVLLPLEVLTAFIVWVVI), 144 to 164 (ISSLASLAALLAFVVSSFIFN), and 167 to 187 (LEIHTHAPVFIIAFIIVYKHL).

It belongs to the PlsY family. Probably interacts with PlsX.

The protein resides in the cell inner membrane. The catalysed reaction is an acyl phosphate + sn-glycerol 3-phosphate = a 1-acyl-sn-glycero-3-phosphate + phosphate. It participates in lipid metabolism; phospholipid metabolism. Functionally, catalyzes the transfer of an acyl group from acyl-phosphate (acyl-PO(4)) to glycerol-3-phosphate (G3P) to form lysophosphatidic acid (LPA). This enzyme utilizes acyl-phosphate as fatty acyl donor, but not acyl-CoA or acyl-ACP. In Campylobacter jejuni (strain RM1221), this protein is Glycerol-3-phosphate acyltransferase.